A 480-amino-acid chain; its full sequence is NADH-quinone oxidoreductase subunit N (480 aa).

A run of 14 helical transmembrane segments spans residues 11 to 31, 38 to 58, 76 to 96, 105 to 125, 128 to 148, 163 to 183, 195 to 215, 240 to 260, 270 to 290, 298 to 318, 329 to 349, 368 to 388, 407 to 427, and 453 to 473; these read LLPE…GVFA, LVAA…AGLL, FALY…IAAA, APEY…LVSM, LFGV…MVAF, LITG…IYGV, AFGE…ISGL, AAFL…RILL, WTAL…LLAL, MLAY…AALQ, VMIY…TIDL, AAAM…SGFF, VAVA…FGII, and VYAM…LAAL.

Belongs to the complex I subunit 2 family. In terms of assembly, NDH-1 is composed of 14 different subunits. Subunits NuoA, H, J, K, L, M, N constitute the membrane sector of the complex.

It localises to the cell membrane. The catalysed reaction is a quinone + NADH + 5 H(+)(in) = a quinol + NAD(+) + 4 H(+)(out). Its function is as follows. NDH-1 shuttles electrons from NADH, via FMN and iron-sulfur (Fe-S) centers, to quinones in the respiratory chain. The immediate electron acceptor for the enzyme in this species is believed to be a menaquinone. Couples the redox reaction to proton translocation (for every two electrons transferred, four hydrogen ions are translocated across the cytoplasmic membrane), and thus conserves the redox energy in a proton gradient. This is NADH-quinone oxidoreductase subunit N from Rubrobacter xylanophilus (strain DSM 9941 / JCM 11954 / NBRC 16129 / PRD-1).